Consider the following 1450-residue polypeptide: Arf-GAP with Rho-GAP domain, ANK repeat and PH domain-containing protein 1 (1450 aa).

One can recognise an SAM domain in the interval Asp6–Ser70. Residues Pro81–Arg90 form a required for interaction with SH3KBP1 region. Disordered stretches follow at residues Phe89–Leu144 and Thr173–Ser302. Positions Pro92 to Leu102 are enriched in pro residues. Positions Gln190–Pro199 are enriched in low complexity. The segment covering Gln200–Pro219 has biased composition (pro residues). 2 stretches are compositionally biased toward acidic residues: residues Glu225–Glu236 and Glu269–His286. A Phosphoserine modification is found at Ser229. Tyr231 is subject to Phosphotyrosine; by PTK6. The PH 1 domain occupies Pro327–Ala419. A Phosphothreonine modification is found at Thr354. Ser428 carries the post-translational modification Phosphoserine. 2 positions are modified to phosphotyrosine: Tyr431 and Tyr504. Residues Gln440–Ala529 enclose the PH 2 domain. The 126-residue stretch at Ser535–Glu660 folds into the Arf-GAP domain. The segment at Cys550–Glu576 adopts a C4-type zinc-finger fold. The residue at position 738 (Ser738) is a Phosphoserine. Positions Thr743–Val850 constitute a PH 3 domain. One can recognise a Rho-GAP domain in the interval Ala954–Phe1139. One can recognise a Ras-associating domain in the interval Gly1172–Ala1261. Residues Gly1274–His1396 enclose the PH 4 domain. Phosphoserine is present on residues Ser1428 and Ser1435.

Interacts with SH3KBP1/CIN85 (via SH3 domains). The interaction is independent of EGF and does not affect ARAP1 GTPase-activating activity but is involved in regulating ubiquitination and endocytic trafficking of EGFR. ARAP1 competes with E3 ubiquitin-protein ligase CBL for binding to SH3KBP1, preventing interaction of CBL with SH3KBP1; this is likely to regulate SH3KBP1-mediated internalization of EGFR. Interacts with TNFRSF10A. Phosphorylated by PTK6 following EGF stimulation which enhances EGFR signaling by delaying EGFR down-regulation; the interaction is mediated by the SH2 domain of PTK6. Phosphorylation promotes association with the Golgi apparatus and endosomes. As to expression, detected in heart, skeletal muscle, spleen, kidney, liver, placenta, lung, peripheral blood leukocytes, adrenal gland, bone marrow, brain, lymph node, mammary gland, prostate, spinal cord, stomach, thyroid and trachea.

The protein localises to the cytoplasm. The protein resides in the golgi apparatus. It localises to the trans-Golgi network. It is found in the golgi stack. Its subcellular location is the cell membrane. The protein localises to the endosome. The protein resides in the multivesicular body. It localises to the cell projection. It is found in the ruffle. Its subcellular location is the podosome. The protein localises to the early endosome. Functionally, phosphatidylinositol 3,4,5-trisphosphate-dependent GTPase-activating protein that modulates actin cytoskeleton remodeling by regulating ARF and RHO family members. Activated by phosphatidylinositol 3,4,5-trisphosphate (PtdIns(3,4,5)P3) binding and, to a lesser extent, by phosphatidylinositol 3,4-bisphosphate (PtdIns(3,4)P2) binding. Has a preference for ARF1 and ARF5. Positively regulates the ring size of circular dorsal ruffles and promotes macropinocytosis. Acts as a bridging factor in osteoclasts to control actin and membrane dynamics. Regulates the condensing of osteoclast podosomes into sealing zones which segregate the bone-facing membrane from other membrane domains and are required for osteoclast resorption activity. Also regulates recruitment of the AP-3 complex to endosomal membranes and trafficking of lysosomal membrane proteins to the ruffled membrane border of osteoclasts to modulate bone resorption. Regulates the endocytic trafficking of EGFR. Regulates the incorporation of CD63 and CD9 into multivesicular bodies. Required in the retinal pigment epithelium (RPE) for photoreceptor survival due to its role in promoting RPE phagocytosis. The sequence is that of Arf-GAP with Rho-GAP domain, ANK repeat and PH domain-containing protein 1 (ARAP1) from Homo sapiens (Human).